We begin with the raw amino-acid sequence, 400 residues long: Dual specificity mitogen-activated protein kinase kinase 2 (400 aa).

Met-1 bears the N-acetylmethionine mark. Ser-23 is subject to Phosphoserine. The region spanning 72–369 (FERISELGAG…LKMLMSHTFI (298 aa)) is the Protein kinase domain. ATP contacts are provided by residues 78–86 (LGAGNGGVV) and Lys-101. Catalysis depends on Asp-194, which acts as the Proton acceptor. Ser-222 carries the phosphoserine; by RAF modification. Phosphoserine is present on residues Ser-226, Ser-293, Ser-295, and Ser-306. The disordered stretch occupies residues 288–309 (EGEPHSISPRPRPPGRPISGHG). Phosphothreonine is present on residues Thr-394 and Thr-396.

The protein belongs to the protein kinase superfamily. STE Ser/Thr protein kinase family. MAP kinase kinase subfamily. Interacts with MORG1. Interacts with SGK1. Interacts with KSR1. Interacts with KSR1 and BRAF; the interaction with KSR1 mediates KSR1-BRAF dimerization. Interacts with GLS. Requires Mg(2+) as cofactor. In terms of processing, MAPKK is itself dependent on Ser/Thr phosphorylation for activity catalyzed by MAP kinase kinase kinases (RAF or MEKK1).

The protein resides in the cytoplasm. Its subcellular location is the membrane. It catalyses the reaction L-seryl-[protein] + ATP = O-phospho-L-seryl-[protein] + ADP + H(+). The catalysed reaction is L-threonyl-[protein] + ATP = O-phospho-L-threonyl-[protein] + ADP + H(+). The enzyme catalyses L-tyrosyl-[protein] + ATP = O-phospho-L-tyrosyl-[protein] + ADP + H(+). In terms of biological role, catalyzes the concomitant phosphorylation of a threonine and a tyrosine residue in a Thr-Glu-Tyr sequence located in MAP kinases. Activates the ERK1 and ERK2 MAP kinases. Activates BRAF in a KSR1 or KSR2-dependent manner; by binding to KSR1 or KSR2 releases the inhibitory intramolecular interaction between KSR1 or KSR2 protein kinase and N-terminal domains which promotes KSR1 or KSR2-BRAF dimerization and BRAF activation. In Canis lupus familiaris (Dog), this protein is Dual specificity mitogen-activated protein kinase kinase 2 (MAP2K2).